The sequence spans 302 residues: tRNA pseudouridine synthase B (302 aa).

D43 acts as the Nucleophile in catalysis.

The protein belongs to the pseudouridine synthase TruB family. Type 1 subfamily.

It carries out the reaction uridine(55) in tRNA = pseudouridine(55) in tRNA. In terms of biological role, responsible for synthesis of pseudouridine from uracil-55 in the psi GC loop of transfer RNAs. This Burkholderia pseudomallei (strain 668) protein is tRNA pseudouridine synthase B.